Consider the following 330-residue polypeptide: Virulence plasmid integrase pGP8-D (330 aa).

A Core-binding (CB) domain is found at 39-124 (FSLFEVIMHW…SYISLTRFLN (86 aa)). Residues 152–327 (VKTNAMNRLQ…SREDNASKKM (176 aa)) enclose the Tyr recombinase domain. Residues arginine 189, lysine 214, histidine 279, arginine 282, and histidine 305 contribute to the active site. Tyrosine 314 serves as the catalytic O-(3'-phospho-DNA)-tyrosine intermediate.

The protein belongs to the 'phage' integrase family.

This is Virulence plasmid integrase pGP8-D from Chlamydia muridarum (strain MoPn / Nigg).